Reading from the N-terminus, the 101-residue chain is Small ribosomal subunit protein uS10 (101 aa).

It belongs to the universal ribosomal protein uS10 family. In terms of assembly, part of the 30S ribosomal subunit.

Functionally, involved in the binding of tRNA to the ribosomes. The protein is Small ribosomal subunit protein uS10 of Parabacteroides distasonis (strain ATCC 8503 / DSM 20701 / CIP 104284 / JCM 5825 / NCTC 11152).